Here is a 168-residue protein sequence, read N- to C-terminus: Cell division inhibitor SulA (168 aa).

Residues 106-112 form a ftsZ binding region; that stretch reads ALLTGNY. Residues 161–168 are lon protease binding; that stretch reads KIHSSLYH.

The protein belongs to the SulA family. In terms of assembly, interacts with FtsZ. In terms of processing, is rapidly cleaved and degraded by the Lon protease once DNA damage is repaired.

Its function is as follows. Component of the SOS system and an inhibitor of cell division. Accumulation of SulA causes rapid cessation of cell division and the appearance of long, non-septate filaments. In the presence of GTP, binds a polymerization-competent form of FtsZ in a 1:1 ratio, thus inhibiting FtsZ polymerization and therefore preventing it from participating in the assembly of the Z ring. This mechanism prevents the premature segregation of damaged DNA to daughter cells during cell division. The sequence is that of Cell division inhibitor SulA from Yersinia enterocolitica serotype O:8 / biotype 1B (strain NCTC 13174 / 8081).